A 570-amino-acid chain; its full sequence is Pentatricopeptide repeat-containing protein At1g31430 (570 aa).

PPR repeat units follow at residues 10–44, 45–79, 80–110, 111–141, 147–177, 181–215, 216–242, 243–277, 278–312, 313–343, 344–378, 379–414, and 415–449; these read SLLM…GLYP, DNFT…GLEF, DSYV…MPQR, DVVS…MSQE, DEGT…VVTE, SVRI…NVKC, WTSM…SPVK, DVVL…GIRP, DNFV…RVTV, DKVV…IKER, DTAS…GVRL, DAIT…NVQP, and KSEH…SDET. Residues 453–528 are type E motif; sequence VYCSLLSAAR…FPGCSSIEID (76 aa). A type E(+) motif region spans residues 529–561; the sequence is GVGHEFIVGDDLLSHPKMDEINSMLHQTTNLML.

Belongs to the PPR family. PCMP-E subfamily.

This is Pentatricopeptide repeat-containing protein At1g31430 (PCMP-E55) from Arabidopsis thaliana (Mouse-ear cress).